We begin with the raw amino-acid sequence, 369 residues long: 3-isopropylmalate dehydrogenase (369 aa).

77–90 (GPKYDVLDFSVKPE) serves as a coordination point for NAD(+). Substrate-binding residues include Arg-97, Arg-107, Arg-135, and Asp-226. Residues Asp-226, Asp-250, and Asp-254 each coordinate Mg(2+). 289–301 (GSAPDIAGQGKAN) provides a ligand contact to NAD(+).

This sequence belongs to the isocitrate and isopropylmalate dehydrogenases family. LeuB type 1 subfamily. As to quaternary structure, homodimer. The cofactor is Mg(2+). Mn(2+) is required as a cofactor.

The protein localises to the cytoplasm. It catalyses the reaction (2R,3S)-3-isopropylmalate + NAD(+) = 4-methyl-2-oxopentanoate + CO2 + NADH. The protein operates within amino-acid biosynthesis; L-leucine biosynthesis; L-leucine from 3-methyl-2-oxobutanoate: step 3/4. Its function is as follows. Catalyzes the oxidation of 3-carboxy-2-hydroxy-4-methylpentanoate (3-isopropylmalate) to 3-carboxy-4-methyl-2-oxopentanoate. The product decarboxylates to 4-methyl-2 oxopentanoate. The protein is 3-isopropylmalate dehydrogenase of Cereibacter sphaeroides (strain ATCC 17023 / DSM 158 / JCM 6121 / CCUG 31486 / LMG 2827 / NBRC 12203 / NCIMB 8253 / ATH 2.4.1.) (Rhodobacter sphaeroides).